A 509-amino-acid polypeptide reads, in one-letter code: MEDIKPNVELKSTQEQSVPTEGSELLNDYDLTKAHETENVDGTEGPANEDEDIGDDSMKVKDEYSERDENVLKPEPMGNAEEPEIPYSYSREYNEYENIKLERHVVSYDSSRPTSGKMNCDVCGLSCISFNVLMVHKRSHTGERPFQCNQCGASFTQKGNLLRHIKLHTGEKPFKCHLCNYACQRRDALTGHLRTHSVEKPYKCEFCGRSYKQRSSLEEHKERCRTFLQSTDLGETASVEARHIKAEMGSERALVLDRLASNVAKRKSSMPQKFIGEKRHCFDVSYNPSYMYEKESEMIQTRMMDQAINNAISYLGAEALRPLVQTPPAPTSEMVPVISSMYPIALTRAEMPNGAPQELEKKNIHLPEKSLPSERGLSPTNSGHDSTDTDSNHEERQNHIYQQNPMVPPRARNGMPLLKEGPRSYDLLKPPPICPRDSIKVINKEGEVTDVYRCDHCRVLFLDYVMFTIHMGCHGFRDPFECNMCGYRSHDRYEFSSHIARGEHRAMLK.

The tract at residues 1-85 (MEDIKPNVEL…PMGNAEEPEI (85 aa)) is disordered. The span at 10-20 (LKSTQEQSVPT) shows a compositional bias: polar residues. Thr-20 is subject to Phosphothreonine. A compositionally biased stretch (basic and acidic residues) spans 56 to 72 (DSMKVKDEYSERDENVL). Glycyl lysine isopeptide (Lys-Gly) (interchain with G-Cter in SUMO2) cross-links involve residues Lys-61, Lys-73, and Lys-100. 3 consecutive C2H2-type zinc fingers follow at residues 118 to 140 (MNCD…KRSH), 146 to 168 (FQCN…IKLH), and 174 to 196 (FKCH…LRTH). The segment at 202 to 224 (YKCEFCGRSYKQRSSLEEHKERC) adopts a C2H2-type 4; atypical zinc-finger fold. Lys-245 is covalently cross-linked (Glycyl lysine isopeptide (Lys-Gly) (interchain with G-Cter in SUMO2)). Thr-326 bears the Phosphothreonine mark. The segment at 365–421 (HLPEKSLPSERGLSPTNSGHDSTDTDSNHEERQNHIYQQNPMVPPRARNGMPLLKEG) is disordered. The residue at position 378 (Ser-378) is a Phosphoserine. Positions 385-398 (DSTDTDSNHEERQN) are enriched in basic and acidic residues. Residues 452 to 474 (YRCDHCRVLFLDYVMFTIHMGCH) form a C2H2-type 5 zinc finger. The interval 452-504 (YRCDHCRVLFLDYVMFTIHMGCHGFRDPFECNMCGYRSHDRYEFSSHIARGEH) is mediates homodimerization and heterodimerization. The C2H2-type 6; atypical zinc-finger motif lies at 480-504 (FECNMCGYRSHDRYEFSSHIARGEH).

This sequence belongs to the Ikaros C2H2-type zinc-finger protein family. In terms of assembly, homodimer. Heterodimer with other IKAROS family members. Interacts with IKZF4 and IKZF5. Interacts with IKZF1. Interacts with HRAS. Interacts with FOXP3; this interaction may be required for silencing target genes and regulating the suppressive activity of FOXP3-positive regulatory T-cells (Treg). Interacts with BCL21L; this interaction blocks the anti-apoptotic role of BCL21L. Associates with histone deacetylase complexes containing HDAC1, MTA2 and SIN3A.

The protein localises to the nucleus. It localises to the cytoplasm. Its function is as follows. Transcription factor that plays an important role in the regulation of lymphocyte differentiation. Plays an essential role in regulation of B-cell differentiation, proliferation and maturation to an effector state. Involved in regulating BCL2 expression and controlling apoptosis in T-cells in an IL2-dependent manner. This is Zinc finger protein Aiolos (IKZF3) from Bos taurus (Bovine).